We begin with the raw amino-acid sequence, 311 residues long: Probable mitochondrial phosphate carrier protein (311 aa).

Topologically, residues 1-23 (MSTPLIPPAPPKKTLQLYTPQYY) are mitochondrial intermembrane. Solcar repeat units lie at residues 21-105 (QYYG…FKHK), 118-203 (YRTS…IVEA), and 219-303 (EKIG…FKIM). Residues 24–44 (GLCTLGGLLACGTTHSAITPL) form a helical membrane-spanning segment. Residues 45 to 67 (DLIKCRKQVNPNIYPGNIAGFKT) lie on the Mitochondrial matrix side of the membrane. A helical membrane pass occupies residues 68 to 88 (ILSKEGLRGLYTGGMPTLIGY). The Mitochondrial intermembrane portion of the chain corresponds to 89–120 (SLQGCGKYGFYELFKHKYSTLVGAQKAHEYRT). The helical transmembrane segment at 121-141 (SIYLAASASAELLADIMLCPM) threads the bilayer. Over 142 to 171 (EAIKVRVQTSNPRFANTTREAWSKIVTNEG) the chain is Mitochondrial matrix. A helical membrane pass occupies residues 172 to 192 (FGTLYRGLAPLWFRQIPYTMM). Topologically, residues 193-220 (KFASFERIVEALYTYIGKPKNMYSKAEK) are mitochondrial intermembrane. A helical transmembrane segment spans residues 221 to 241 (IGISFAGGYMAGVLCAIISHP). The Mitochondrial matrix segment spans residues 242–269 (ADVMVSKLNSNKKAGEGAGAAAARIYKE). Residues 270-290 (IGFSGLWNGLGVRIVMIGTLT) form a helical membrane-spanning segment. The Mitochondrial intermembrane segment spans residues 291–311 (GAQWLIYDSFKIMCGFPATGA).

The protein belongs to the mitochondrial carrier (TC 2.A.29) family.

Its subcellular location is the mitochondrion inner membrane. In terms of biological role, transport of phosphate groups from the cytosol to the mitochondrial matrix. This Schizosaccharomyces pombe (strain 972 / ATCC 24843) (Fission yeast) protein is Probable mitochondrial phosphate carrier protein.